The chain runs to 586 residues: Glutamine--tRNA ligase (586 aa).

A 'HIGH' region motif is present at residues 58-68; it reads PEPNGYLHIGH. Residues 59 to 61 and 65 to 71 contribute to the ATP site; these read EPN and HIGHAKS. Positions 91 and 240 each coordinate L-glutamine. ATP contacts are provided by residues threonine 259 and 294-295; that span reads RL. Positions 301–305 match the 'KMSKS' region motif; the sequence is VTSKR.

The protein belongs to the class-I aminoacyl-tRNA synthetase family. As to quaternary structure, monomer.

It is found in the cytoplasm. The catalysed reaction is tRNA(Gln) + L-glutamine + ATP = L-glutaminyl-tRNA(Gln) + AMP + diphosphate. The polypeptide is Glutamine--tRNA ligase (Bordetella avium (strain 197N)).